A 160-amino-acid chain; its full sequence is Protein max (160 aa).

The segment covering 1 to 13 has biased composition (acidic residues); sequence MSDNDDIEVESDE. Positions 1-40 are disordered; sequence MSDNDDIEVESDEEQPRFQSAADKRAHHNALERKRRDHIK. Position 2 is an N-acetylserine (serine 2). A phosphoserine mark is found at serine 2 and serine 11. The bHLH domain maps to 23 to 74; it reads DKRAHHNALERKRRDHIKDSFHSLRDSVPSLQGEKASRAQILDKATEYIQYM. Residues 29–40 are compositionally biased toward basic and acidic residues; sequence NALERKRRDHIK. At lysine 66 the chain carries N6-acetyllysine. The segment at 81-102 is leucine-zipper; sequence HQQDIDDLKRQNALLEQQVRAL. Residues 104–160 form a disordered region; it reads KARSSAQLQTNYPSSDNSLYTNAKGGTISAFDGGSDSSSESEPEEPQSRKKLRMEAS. Position 107 is a phosphoserine (serine 107). Residues 107-124 are compositionally biased toward polar residues; the sequence is SSAQLQTNYPSSDNSLYT. Lysine 153 and lysine 154 each carry N6-acetyllysine.

This sequence belongs to the MAX family. As to quaternary structure, efficient DNA binding requires dimerization with another bHLH protein. Binds DNA as a heterodimer with MYC or MAD. Part of the E2F6.com-1 complex in G0 phase composed of E2F6, MGA, MAX, TFDP1, CBX3, BAT8, EUHMTASE1, RING1, RNF2, MBLR, L3MBTL2 and YAF2. Component of some MLL1/MLL complex, at least composed of the core components KMT2A/MLL1, ASH2L, HCFC1/HCF1, WDR5 and RBBP5, as well as the facultative components BACC1, CHD8, E2F6, HSP70, INO80C, KANSL1, LAS1L, MAX, MCRS1, MGA, MYST1/MOF, PELP1, PHF20, PRP31, RING2, RUVB1/TIP49A, RUVB2/TIP49B, SENP3, TAF1, TAF4, TAF6, TAF7, TAF9 and TEX10. Interacts with SPAG9. The heterodimer MYC:MAX interacts with ABI1; the interaction may enhance MYC:MAX transcriptional activity. Post-translationally, phosphorylated.

The protein resides in the nucleus. It is found in the cell projection. The protein localises to the dendrite. Transcription regulator. Forms a sequence-specific DNA-binding protein complex with MYC or MAD which recognizes the core sequence 5'-CAC[GA]TG-3'. The MYC:MAX complex is a transcriptional activator, whereas the MAD:MAX complex is a repressor. CpG methylation of the recognition site greatly inhibits DNA binding, suggesting that DNA methylation may regulate the MYC:MAX complex in vivo. May repress transcription via the recruitment of a chromatin remodeling complex containing H3 'Lys-9' histone methyltransferase activity. Represses MYC transcriptional activity from E-box elements. The sequence is that of Protein max from Mus musculus (Mouse).